The following is a 308-amino-acid chain: UPF0282 protein M1425_2116 (308 aa).

It belongs to the UPF0282 family.

This is UPF0282 protein M1425_2116 from Saccharolobus islandicus (strain M.14.25 / Kamchatka #1) (Sulfolobus islandicus).